Consider the following 315-residue polypeptide: Transposase for insertion sequence element IS640 (315 aa).

Residues 5 to 66 (EDFYMIKQMR…PFMDYIDMRL (62 aa)) form the HTH IS21-type domain. Residues 111–285 (FETQPGYQLQ…TPEQRSRWSR (175 aa)) enclose the Integrase catalytic domain.

This sequence belongs to the transposase IS21/IS408/IS1162 family.

Functionally, involved in the transposition of the insertion sequence. The polypeptide is Transposase for insertion sequence element IS640 (istA) (Shigella sonnei).